A 199-amino-acid polypeptide reads, in one-letter code: MIGRITGILLEKNPPQIVVDTHGVGYEIDVPMSTFYGLPATGESLSLFTHLAIREDGHFLYGFASADERAAFRQLLKVSGIGARTALSVLSGLSVSDLAQAVALQETGRLVKIPGIGKKTAERLLLELRDKLGRALPGFGASTVPGAAAQPADSRSDILNALLALGYSDKEAQSALKAIPPETGVSDGIRQALKLLSKA.

The interval 1–64 (MIGRITGILL…EDGHFLYGFA (64 aa)) is domain I. Positions 65-143 (SADERAAFRQ…RALPGFGAST (79 aa)) are domain II. The segment at 144-152 (VPGAAAQPA) is flexible linker. A domain III region spans residues 152–199 (ADSRSDILNALLALGYSDKEAQSALKAIPPETGVSDGIRQALKLLSKA).

Belongs to the RuvA family. Homotetramer. Forms an RuvA(8)-RuvB(12)-Holliday junction (HJ) complex. HJ DNA is sandwiched between 2 RuvA tetramers; dsDNA enters through RuvA and exits via RuvB. An RuvB hexamer assembles on each DNA strand where it exits the tetramer. Each RuvB hexamer is contacted by two RuvA subunits (via domain III) on 2 adjacent RuvB subunits; this complex drives branch migration. In the full resolvosome a probable DNA-RuvA(4)-RuvB(12)-RuvC(2) complex forms which resolves the HJ.

Its subcellular location is the cytoplasm. Functionally, the RuvA-RuvB-RuvC complex processes Holliday junction (HJ) DNA during genetic recombination and DNA repair, while the RuvA-RuvB complex plays an important role in the rescue of blocked DNA replication forks via replication fork reversal (RFR). RuvA specifically binds to HJ cruciform DNA, conferring on it an open structure. The RuvB hexamer acts as an ATP-dependent pump, pulling dsDNA into and through the RuvAB complex. HJ branch migration allows RuvC to scan DNA until it finds its consensus sequence, where it cleaves and resolves the cruciform DNA. This Aromatoleum aromaticum (strain DSM 19018 / LMG 30748 / EbN1) (Azoarcus sp. (strain EbN1)) protein is Holliday junction branch migration complex subunit RuvA.